The following is a 457-amino-acid chain: tRNA-2-methylthio-N(6)-dimethylallyladenosine synthase (457 aa).

The MTTase N-terminal domain maps to K3–T120. 6 residues coordinate [4Fe-4S] cluster: C12, C49, C83, C157, C161, and C164. Residues R143–R377 enclose the Radical SAM core domain. Positions Q380–L447 constitute a TRAM domain.

Belongs to the methylthiotransferase family. MiaB subfamily. Monomer. It depends on [4Fe-4S] cluster as a cofactor.

The protein resides in the cytoplasm. It catalyses the reaction N(6)-dimethylallyladenosine(37) in tRNA + (sulfur carrier)-SH + AH2 + 2 S-adenosyl-L-methionine = 2-methylsulfanyl-N(6)-dimethylallyladenosine(37) in tRNA + (sulfur carrier)-H + 5'-deoxyadenosine + L-methionine + A + S-adenosyl-L-homocysteine + 2 H(+). Functionally, catalyzes the methylthiolation of N6-(dimethylallyl)adenosine (i(6)A), leading to the formation of 2-methylthio-N6-(dimethylallyl)adenosine (ms(2)i(6)A) at position 37 in tRNAs that read codons beginning with uridine. The sequence is that of tRNA-2-methylthio-N(6)-dimethylallyladenosine synthase from Burkholderia multivorans (strain ATCC 17616 / 249).